The sequence spans 689 residues: DNA ligase (689 aa).

Residues 40–44 (DSEYD), 89–90 (SL), and E121 contribute to the NAD(+) site. Catalysis depends on K123, which acts as the N6-AMP-lysine intermediate. Positions 144, 179, 295, and 319 each coordinate NAD(+). The Zn(2+) site is built by C413, C416, C431, and C437. A BRCT domain is found at 610–689 (REQSSLTDKI…EEWLTLIKNV (80 aa)).

The protein belongs to the NAD-dependent DNA ligase family. LigA subfamily. It depends on Mg(2+) as a cofactor. Mn(2+) is required as a cofactor.

The enzyme catalyses NAD(+) + (deoxyribonucleotide)n-3'-hydroxyl + 5'-phospho-(deoxyribonucleotide)m = (deoxyribonucleotide)n+m + AMP + beta-nicotinamide D-nucleotide.. In terms of biological role, DNA ligase that catalyzes the formation of phosphodiester linkages between 5'-phosphoryl and 3'-hydroxyl groups in double-stranded DNA using NAD as a coenzyme and as the energy source for the reaction. It is essential for DNA replication and repair of damaged DNA. This Rickettsia africae (strain ESF-5) protein is DNA ligase.